The following is a 443-amino-acid chain: Threonine/serine transporter TdcC (443 aa).

The next 11 membrane-spanning stretches (helical) occupy residues 24–44 (WVLG…PISA), 45–65 (GIGG…IAFF), 95–115 (VGGV…LWIY), 140–160 (VVAL…KDLM), 163–183 (VMGY…LSLI), 207–227 (ILVT…FSPI), 259–279 (ASVL…FTLS), 319–339 (ASII…LGTL), 363–383 (LNMI…YINP), 385–405 (ILDL…CLLP), and 423–443 (SNYF…YQLM).

The protein belongs to the amino acid/polyamine transporter 2 family. SdaC/TdcC subfamily.

The protein localises to the cell inner membrane. The catalysed reaction is L-threonine(in) + H(+)(in) = L-threonine(out) + H(+)(out). It carries out the reaction L-serine(in) + H(+)(in) = L-serine(out) + H(+)(out). In terms of biological role, involved in the import of threonine and serine into the cell, with the concomitant import of a proton (symport system). The polypeptide is Threonine/serine transporter TdcC (Edwardsiella piscicida).